Consider the following 177-residue polypeptide: R-phycoerythrin beta chain (177 aa).

(2R,3E)-phycoerythrobilin contacts are provided by N35 and D39. Residues C50, D54, and C61 each coordinate phycourobilin. Residues N72, R77–R78, C82, and R84–D85 contribute to the (2R,3E)-phycoerythrobilin site. An N4-methylasparagine modification is found at N72. S147–G148 contributes to the phycourobilin binding site. C158 provides a ligand contact to (2R,3E)-phycoerythrobilin.

This sequence belongs to the phycobiliprotein family. As to quaternary structure, heterododecamer of 6 alpha and 6 beta chains. The basic functional unit of phycobiliproteins is a ring-shaped hexamer formed from two back-to-back trimers contacting via the alpha chain subunits. The trimers are composed of alpha/beta subunit heterodimers arranged around a three-fold axis of symmetry. The phycoerythrins also contain a gamma subunit which is located in the center of the hexamer. In terms of processing, contains two covalently linked phycoerythrobilin chromophores and one covalently linked phycourobilin chromophore.

The protein resides in the plastid. It localises to the chloroplast thylakoid membrane. Functionally, light-harvesting photosynthetic tetrapyrrole chromophore-protein from the phycobiliprotein complex. The chain is R-phycoerythrin beta chain (cpeB) from Griffithsia monilis (Red alga).